The sequence spans 483 residues: CBL-interacting serine/threonine-protein kinase 19 (483 aa).

Positions 28–282 (YEMGRLLGHG…MPDIMETSWF (255 aa)) constitute a Protein kinase domain. Residues 34–42 (LGHGTFAKV) and Lys-57 contribute to the ATP site. The active-site Proton acceptor is Asp-150. The segment at 168–197 (DFGLSAVSDQIRQDGLFHTFCGTPAYVAPE) is activation loop. Ser-172 is subject to Phosphoserine. The residue at position 186 (Thr-186) is a Phosphothreonine. The segment covering 313–322 (SVSGRSSTVS) has biased composition (polar residues). Residues 313–338 (SVSGRSSTVSEPEDFESFDGRRRGGS) form a disordered region. Positions 340-364 (PRPASLNAFDLISFSPGFDLSGLFE) constitute an NAF domain. Residues 367–396 (GEGSRFVSGAPVGQIISKLEEIARIVSFTV) are PPI. The disordered stretch occupies residues 459–483 (NLSSENGQRVSGSRSLPSFLLSDTD).

Belongs to the protein kinase superfamily. CAMK Ser/Thr protein kinase family. SNF1 subfamily. It depends on Mn(2+) as a cofactor.

The catalysed reaction is L-seryl-[protein] + ATP = O-phospho-L-seryl-[protein] + ADP + H(+). It carries out the reaction L-threonyl-[protein] + ATP = O-phospho-L-threonyl-[protein] + ADP + H(+). In terms of biological role, CIPK serine-threonine protein kinases interact with CBL proteins. Binding of a CBL protein to the regulatory NAF domain of CIPK protein lead to the activation of the kinase in a calcium-dependent manner. The chain is CBL-interacting serine/threonine-protein kinase 19 (CIPK19) from Arabidopsis thaliana (Mouse-ear cress).